Here is a 732-residue protein sequence, read N- to C-terminus: Kell blood group glycoprotein (732 aa).

The interval 1 to 37 (MEGGDQSEEEPRERSQAGGMGTLWSQESTPEERLPVE) is disordered. Over 1–47 (MEGGDQSEEEPRERSQAGGMGTLWSQESTPEERLPVEGSRPWAVARR) the chain is Cytoplasmic. Phosphoserine is present on S7. Residues 48 to 67 (VLTAILILGLLLCFSVLLFY) form a helical; Signal-anchor for type II membrane protein membrane-spanning segment. At 68-732 (NFQNCGPRPC…LNPSSRCQLW (665 aa)) the chain is on the extracellular side. A Peptidase M13 domain is found at 76–732 (PCETSVCLDL…LNPSSRCQLW (657 aa)). C77 and C82 are joined by a disulfide. Residues N94 and N115 are each glycosylated (N-linked (GlcNAc...) asparagine). Cystine bridges form between C100–C717, C108–C682, C155–C410, and C610–C729. N191 carries N-linked (GlcNAc...) asparagine; in KEL2 antigen glycosylation. N345 carries N-linked (GlcNAc...) asparagine glycosylation. H581 contributes to the Zn(2+) binding site. The active site involves E582. H585 is a binding site for Zn(2+). N-linked (GlcNAc...) asparagine glycosylation is present at N627. E634 serves as a coordination point for Zn(2+). The active-site Proton donor is the D638. The interval 684–703 (KPSPQDSHDTHSPPHLRVHG) is disordered.

This sequence belongs to the peptidase M13 family. As to quaternary structure, heterodimer with XK; disulfide-linked. Zn(2+) serves as cofactor. In terms of processing, N-glycosylated. As to expression, expressed at high levels in erythrocytes and testis (in Sertoli cells), and, at lower levels, in skeletal muscle, tonsils (in follicular dendritic cells), lymph node, spleen and appendix (at protein level). Also expressed in many adult and fetal nonerythroid tissues, including brain, spleen, lymph nodes and bone marrow.

It is found in the cell membrane. In terms of biological role, zinc endopeptidase with endothelin-3-converting enzyme activity. Cleaves EDN1, EDN2 and EDN3, with a marked preference for EDN3. The protein is Kell blood group glycoprotein (KEL) of Homo sapiens (Human).